Consider the following 155-residue polypeptide: Aspartate carbamoyltransferase regulatory chain (155 aa).

Residues Cys-112, Cys-117, Cys-138, and Cys-141 each contribute to the Zn(2+) site.

This sequence belongs to the PyrI family. In terms of assembly, contains catalytic and regulatory chains. Requires Zn(2+) as cofactor.

Its function is as follows. Involved in allosteric regulation of aspartate carbamoyltransferase. This chain is Aspartate carbamoyltransferase regulatory chain, found in Methanocorpusculum labreanum (strain ATCC 43576 / DSM 4855 / Z).